Here is a 209-residue protein sequence, read N- to C-terminus: Pyridoxal phosphate homeostasis protein (209 aa).

Lys31 is subject to N6-(pyridoxal phosphate)lysine.

This sequence belongs to the pyridoxal phosphate-binding protein YggS/PROSC family.

Pyridoxal 5'-phosphate (PLP)-binding protein, which is involved in PLP homeostasis. The chain is Pyridoxal phosphate homeostasis protein from Deinococcus radiodurans (strain ATCC 13939 / DSM 20539 / JCM 16871 / CCUG 27074 / LMG 4051 / NBRC 15346 / NCIMB 9279 / VKM B-1422 / R1).